A 1294-amino-acid polypeptide reads, in one-letter code: Phosphoribosylformylglycinamidine synthase (1294 aa).

The disordered stretch occupies residues 303–325 (WPGAATGSGGEIRDEGATGRGSK). ATP contacts are provided by residues 305–316 (GAATGSGGEIRD), 384–386 (TGY), and alanine 676. The Mg(2+) site is built by aspartate 677, glutamate 716, asparagine 720, and aspartate 883. Serine 885 is a binding site for ATP. The region spanning 1041 to 1294 (VAVLREQGVN…MFRNARRQLG (254 aa)) is the Glutamine amidotransferase type-1 domain. Residue cysteine 1134 is the Nucleophile of the active site. Catalysis depends on residues histidine 1259 and glutamate 1261.

This sequence in the N-terminal section; belongs to the FGAMS family. Monomer.

It is found in the cytoplasm. It catalyses the reaction N(2)-formyl-N(1)-(5-phospho-beta-D-ribosyl)glycinamide + L-glutamine + ATP + H2O = 2-formamido-N(1)-(5-O-phospho-beta-D-ribosyl)acetamidine + L-glutamate + ADP + phosphate + H(+). The protein operates within purine metabolism; IMP biosynthesis via de novo pathway; 5-amino-1-(5-phospho-D-ribosyl)imidazole from N(2)-formyl-N(1)-(5-phospho-D-ribosyl)glycinamide: step 1/2. Its function is as follows. Phosphoribosylformylglycinamidine synthase involved in the purines biosynthetic pathway. Catalyzes the ATP-dependent conversion of formylglycinamide ribonucleotide (FGAR) and glutamine to yield formylglycinamidine ribonucleotide (FGAM) and glutamate. This Pectobacterium atrosepticum (strain SCRI 1043 / ATCC BAA-672) (Erwinia carotovora subsp. atroseptica) protein is Phosphoribosylformylglycinamidine synthase.